A 62-amino-acid chain; its full sequence is Cryptic Mu-phage protein com (62 aa).

The protein belongs to the com family.

This chain is Cryptic Mu-phage protein com, found in Shigella dysenteriae.